The following is a 355-amino-acid chain: Protein-tyrosine sulfotransferase 1 (355 aa).

The Cytoplasmic portion of the chain corresponds to 1–8; it reads MIGKLKQN. A helical; Signal-anchor for type II membrane protein membrane pass occupies residues 9-25; the sequence is LLVACLVISSVTVFYLC. Residues 26–355 lie on the Lumenal side of the membrane; sequence RHAMDCHHRI…QKSPEKPNPS (330 aa). Asparagine 55 carries an N-linked (GlcNAc...) asparagine glycan. 3'-phosphoadenylyl sulfate is bound at residue 76 to 80; it reads RSGTT. Cysteine 94 and cysteine 154 are joined by a disulfide. Catalysis depends on glutamate 97, which acts as the Proton donor/acceptor. An interaction with peptide substrate region spans residues 99-103; that stretch reads RVIPR. Positions 181, 189, and 193 each coordinate 3'-phosphoadenylyl sulfate. Cysteines 223 and 230 form a disulfide. Residues tyrosine 235, 282–291, and lysine 297 contribute to the 3'-phosphoadenylyl sulfate site; that span reads STDQVIKPVN. Positions 325-355 are disordered; that stretch reads HANPPNYGRPDPLVLDNTRRLQKSPEKPNPS. Residues 341 to 355 are compositionally biased toward basic and acidic residues; it reads NTRRLQKSPEKPNPS.

The protein belongs to the protein sulfotransferase family.

Its subcellular location is the golgi apparatus membrane. It catalyses the reaction L-tyrosyl-[protein] + 3'-phosphoadenylyl sulfate = O-sulfo-L-tyrosine-[protein] + adenosine 3',5'-bisphosphate + H(+). In terms of biological role, catalyzes the O-sulfation of tyrosine residues within acidic motifs of polypeptides, using 3'-phosphoadenylyl sulfate (PAPS) as cosubstrate. The polypeptide is Protein-tyrosine sulfotransferase 1 (tpst1) (Danio rerio (Zebrafish)).